A 128-amino-acid chain; its full sequence is Phosphoribosyl-AMP cyclohydrolase (128 aa).

A Mg(2+)-binding site is contributed by aspartate 94. Residue cysteine 95 participates in Zn(2+) binding. Mg(2+) contacts are provided by aspartate 96 and aspartate 98. Residues cysteine 111 and cysteine 118 each coordinate Zn(2+).

It belongs to the PRA-CH family. In terms of assembly, homodimer. Requires Mg(2+) as cofactor. Zn(2+) serves as cofactor.

It is found in the cytoplasm. The enzyme catalyses 1-(5-phospho-beta-D-ribosyl)-5'-AMP + H2O = 1-(5-phospho-beta-D-ribosyl)-5-[(5-phospho-beta-D-ribosylamino)methylideneamino]imidazole-4-carboxamide. It functions in the pathway amino-acid biosynthesis; L-histidine biosynthesis; L-histidine from 5-phospho-alpha-D-ribose 1-diphosphate: step 3/9. Its function is as follows. Catalyzes the hydrolysis of the adenine ring of phosphoribosyl-AMP. The polypeptide is Phosphoribosyl-AMP cyclohydrolase (Streptomyces coelicolor (strain ATCC BAA-471 / A3(2) / M145)).